We begin with the raw amino-acid sequence, 254 residues long: 4-hydroxy-tetrahydrodipicolinate reductase (254 aa).

Residues 8 to 13, D35, 86 to 88, and 110 to 113 contribute to the NAD(+) site; these read GCSGKM, CST, and SANM. The active-site Proton donor/acceptor is H143. H144 serves as a coordination point for (S)-2,3,4,5-tetrahydrodipicolinate. K147 acts as the Proton donor in catalysis. Residue 153 to 154 participates in (S)-2,3,4,5-tetrahydrodipicolinate binding; the sequence is GT.

It belongs to the DapB family.

The protein resides in the cytoplasm. The catalysed reaction is (S)-2,3,4,5-tetrahydrodipicolinate + NAD(+) + H2O = (2S,4S)-4-hydroxy-2,3,4,5-tetrahydrodipicolinate + NADH + H(+). It catalyses the reaction (S)-2,3,4,5-tetrahydrodipicolinate + NADP(+) + H2O = (2S,4S)-4-hydroxy-2,3,4,5-tetrahydrodipicolinate + NADPH + H(+). The protein operates within amino-acid biosynthesis; L-lysine biosynthesis via DAP pathway; (S)-tetrahydrodipicolinate from L-aspartate: step 4/4. Its function is as follows. Catalyzes the conversion of 4-hydroxy-tetrahydrodipicolinate (HTPA) to tetrahydrodipicolinate. This Clostridium perfringens (strain SM101 / Type A) protein is 4-hydroxy-tetrahydrodipicolinate reductase.